Consider the following 194-residue polypeptide: Peptidyl-tRNA hydrolase (194 aa).

Residue Tyr16 participates in tRNA binding. His21 (proton acceptor) is an active-site residue. Residues Phe67, Asn69, and Asn115 each coordinate tRNA.

Belongs to the PTH family. In terms of assembly, monomer.

The protein localises to the cytoplasm. It catalyses the reaction an N-acyl-L-alpha-aminoacyl-tRNA + H2O = an N-acyl-L-amino acid + a tRNA + H(+). Functionally, hydrolyzes ribosome-free peptidyl-tRNAs (with 1 or more amino acids incorporated), which drop off the ribosome during protein synthesis, or as a result of ribosome stalling. In terms of biological role, catalyzes the release of premature peptidyl moieties from peptidyl-tRNA molecules trapped in stalled 50S ribosomal subunits, and thus maintains levels of free tRNAs and 50S ribosomes. The sequence is that of Peptidyl-tRNA hydrolase from Sodalis glossinidius (strain morsitans).